A 282-amino-acid chain; its full sequence is MATPFLPAGATTGDSGGELSSGDDSGDLESFQTPEAEATRSLAELFEKAAAHVQGLVQVASREQLLYLYARYKQVKVGNCNIPKPNFFDFEGKQKWEAWKALGDSSPSQAMQEYIAAVKKLDPGWNPQVSEKKGKEGSSGFGGPVVSSLYHEETIREEDKNIFDYCRENNIDHITKAIKSKTVDVNMTDEEGRALLHWACDRGHKELVKVLLQCEAGINCQDNEGQTALHYAAACEFSDIVELLLQSGADPTLRDQDGCLPEEVTGCKAVSLVLQLHRAGKA.

Residues 1 to 34 are disordered; it reads MATPFLPAGATTGDSGGELSSGDDSGDLESFQTP. Ser41 is modified (phosphoserine). The ACB domain maps to 42–127; sequence LAELFEKAAA…VKKLDPGWNP (86 aa). An acyl-CoA contacts are provided by residues 69-73 and Lys95; that span reads YARYK. Ser106 is subject to Phosphoserine. An an acyl-CoA-binding site is contributed by Tyr114. ANK repeat units follow at residues 191 to 220 and 224 to 253; these read EGRALLHWACDRGHKELVKVLLQCEAGINC and EGQTALHYAAACEFSDIVELLLQSGADPTL.

As to quaternary structure, monomer.

It is found in the cytoplasm. Its subcellular location is the nucleus. Binds long-chain acyl-coenzyme A molecules with a strong preference for unsaturated C18:1-CoA, lower affinity for unsaturated C20:4-CoA, and very weak affinity for saturated C16:0-CoA. Does not bind fatty acids. Plays a role in protein N-myristoylation. The polypeptide is Acyl-CoA-binding domain-containing protein 6 (Acbd6) (Rattus norvegicus (Rat)).